The sequence spans 120 residues: V-type proton ATPase subunit F (120 aa).

Belongs to the V-ATPase F subunit family. V-ATPase is a heteromultimeric enzyme composed of a peripheral catalytic V1 complex (components A to H) attached to an integral membrane V0 proton pore complex (components: a, c, c', c'', d, e, f and VOA1).

The protein resides in the vacuole membrane. Functionally, subunit of the V1 complex of vacuolar(H+)-ATPase (V-ATPase), a multisubunit enzyme composed of a peripheral complex (V1) that hydrolyzes ATP and a membrane integral complex (V0) that translocates protons. V-ATPase is responsible for acidifying and maintaining the pH of intracellular compartments. The chain is V-type proton ATPase subunit F from Schizosaccharomyces pombe (strain 972 / ATCC 24843) (Fission yeast).